A 428-amino-acid polypeptide reads, in one-letter code: Endoplasmic reticulum junction formation protein lunapark (428 aa).

Residue Gly2 is the site of N-myristoyl glycine attachment. Topologically, residues 2-45 (GGLFSRWRTKLSTVEVLESIDKEIQALEEFREKNQRLQKLRVGR) are cytoplasmic. Residues 16 to 43 (EVLESIDKEIQALEEFREKNQRLQKLRV) are a coiled coil. The helical transmembrane segment at 46–66 (LILYSSVLYLFTCLIVYLWYL) threads the bilayer. The Lumenal portion of the chain corresponds to 67–77 (PDEFTARLAMT). A helical membrane pass occupies residues 78–98 (LPFFAFPLIIWSIRTVIIFFF). Topologically, residues 99 to 428 (SKRTERNNEA…ELNGESLTAE (330 aa)) are cytoplasmic. The stretch at 102–128 (TERNNEALDDLKSQRKKILEEVMEKET) forms a coiled coil. Phosphoserine occurs at positions 114, 153, 177, 182, and 194. The disordered stretch occupies residues 143 to 248 (SKKAKECEPP…PPGPPLARPI (106 aa)). Residues 185-198 (QGPPPQVPVSPGPP) show a composition bias toward pro residues. Phosphothreonine occurs at positions 211 and 213. 2 positions are modified to phosphoserine: Ser217 and Ser227. A C4-type; plays a role in ER morphology zinc finger spans residues 276 to 301 (CQQCFSHNGMALKEEFEYIAFRCAYC). Phosphoserine occurs at positions 321, 353, and 384. The tract at residues 361–428 (NNTEQTDDKI…ELNGESLTAE (68 aa)) is disordered. Acidic residues predominate over residues 386-401 (SEEPEEKQETENEEAS). Ser414 carries the phosphoserine modification.

The protein belongs to the lunapark family. In terms of assembly, homodimer; homodimerization requires the C4-type zinc finger motif and decreases during mitosis in a phosphorylation-dependent manner. Post-translationally, myristoylated; myristoylation is necessary for the endoplasmic reticulum (ER) three-way ER tubular junction formation, but is not required neither for membrane translocation, membrane topology formation, nor for the specific localization to ER membranes. Phosphorylated. Phosphorylation occurs at Ser-177, Ser-182, Ser-217, Ser-227, Ser-321 and Ser-384 during interphase. Phosphorylation occurs at Ser-114, Ser-153, Ser-194, Thr-211 and Ser-353 during mitosis; these phosphorylations reduce both its homodimerization and the ER three-way tubular junction formation. In terms of processing, subject to proteasomal degradation following phosphorylation during mitosis.

It is found in the endoplasmic reticulum membrane. Endoplasmic reticulum (ER)-shaping membrane protein that plays a role in determining ER morphology. Involved in the stabilization of nascent three-way ER tubular junctions within the ER network. May also play a role as a curvature-stabilizing protein within three-way ER tubular junction network. May be involved in limb and central nervous system development. The chain is Endoplasmic reticulum junction formation protein lunapark from Pongo abelii (Sumatran orangutan).